An 84-amino-acid polypeptide reads, in one-letter code: UPF0291 protein EUBELI_00985 (84 aa).

Belongs to the UPF0291 family.

It is found in the cytoplasm. This is UPF0291 protein EUBELI_00985 from Lachnospira eligens (strain ATCC 27750 / DSM 3376 / VPI C15-48 / C15-B4) (Eubacterium eligens).